Reading from the N-terminus, the 179-residue chain is Low molecular weight phosphotyrosine protein phosphatase (179 aa).

Residue C15 is the Nucleophile of the active site. R21 is a catalytic residue. D148 acts as the Proton donor in catalysis.

Belongs to the low molecular weight phosphotyrosine protein phosphatase family.

It is found in the cytoplasm. The enzyme catalyses O-phospho-L-tyrosyl-[protein] + H2O = L-tyrosyl-[protein] + phosphate. It catalyses the reaction a phosphate monoester + H2O = an alcohol + phosphate. In terms of biological role, acts on tyrosine phosphorylated proteins, low-MW aryl phosphates and natural and synthetic acyl phosphates. The sequence is that of Low molecular weight phosphotyrosine protein phosphatase (acp1) from Dictyostelium discoideum (Social amoeba).